Here is a 137-residue protein sequence, read N- to C-terminus: Envelope glycoprotein L (137 aa).

An N-terminal signal peptide occupies residues Met-1 to Gly-22. The interval Asn-23 to Leu-128 is interaction with gH. 2 disulfide bridges follow: Cys-28/Cys-56 and Cys-29/Cys-79.

It belongs to the herpesviridae glycoprotein L family. As to quaternary structure, interacts with glycoprotein H (gH); this interaction is necessary for the correct processing and cell surface expression of gH. The heterodimer gH/gL seems to interact with gB trimers during fusion. The heterodimer gH/gL interacts with host EPHA2 to facilitate virus internalization and fusion.

Its subcellular location is the virion membrane. The protein localises to the host cell membrane. It localises to the host Golgi apparatus. It is found in the host trans-Golgi network. Its function is as follows. The heterodimer glycoprotein H-glycoprotein L is required for the fusion of viral and plasma membranes leading to virus entry into the host cell. Acts as a functional inhibitor of gH and maintains gH in an inhibited form. Upon binding to host integrins, gL dissociates from gH leading to activation of the viral fusion glycoproteins gB and gH. Fusion of EBV with B-lymphocytes requires the additional receptor-binding protein gp42, which forms a complex with gH/gL. The heterodimer gH/gL targets also host EPHA2 to promote viral entry. The sequence is that of Envelope glycoprotein L from Homo sapiens (Human).